The sequence spans 277 residues: MKTKTDFLKMKQEGEPIVMLTAYDYPAAKLAEQAGVDMILVGDSLGMVVLGLDSTVSVTVADMIHHTKAVKRGAKDTFVVTDMPFMSYHCSLESALKNAAAIVQESGADALKLEGGDGVFETITALTRGGIPVVSHLGLTPQSVGVLGGYKVQGKDEESAGKLIEDSRRCEEAGAMALVLECVPAALAERISKELTIPVIGIGAGAGTDGQVLVYHDVVGHGVSRTPKFVKQYAQIDQPLEQALRGYVEDVRSRVFPEDAHSFRIDQQVLEGLYGGK.

Mg(2+)-binding residues include Asp-43 and Asp-82. 3-methyl-2-oxobutanoate contacts are provided by residues 43–44 (DS), Asp-82, and Lys-112. Mg(2+) is bound at residue Glu-114. The active-site Proton acceptor is Glu-181.

Belongs to the PanB family. Homodecamer; pentamer of dimers. The cofactor is Mg(2+).

It is found in the cytoplasm. The catalysed reaction is 3-methyl-2-oxobutanoate + (6R)-5,10-methylene-5,6,7,8-tetrahydrofolate + H2O = 2-dehydropantoate + (6S)-5,6,7,8-tetrahydrofolate. The protein operates within cofactor biosynthesis; (R)-pantothenate biosynthesis; (R)-pantoate from 3-methyl-2-oxobutanoate: step 1/2. Its function is as follows. Catalyzes the reversible reaction in which hydroxymethyl group from 5,10-methylenetetrahydrofolate is transferred onto alpha-ketoisovalerate to form ketopantoate. This chain is 3-methyl-2-oxobutanoate hydroxymethyltransferase, found in Bacillus licheniformis (strain ATCC 14580 / DSM 13 / JCM 2505 / CCUG 7422 / NBRC 12200 / NCIMB 9375 / NCTC 10341 / NRRL NRS-1264 / Gibson 46).